Consider the following 93-residue polypeptide: Sec-independent protein translocase protein TatA (93 aa).

Residues 1 to 21 traverse the membrane as a helical segment; that stretch reads MGAMSPWHWAIVALVVVILFG. Residues 44 to 93 form a disordered region; the sequence is KEMQNDNSTPAPTAQQSAPAELPVADTTTAPVTPPAPVQPQPQHTEPKSA. Residues 51 to 74 show a composition bias toward low complexity; sequence STPAPTAQQSAPAELPVADTTTAP.

It belongs to the TatA/E family. As to quaternary structure, the Tat system comprises two distinct complexes: a TatABC complex, containing multiple copies of TatA, TatB and TatC subunits, and a separate TatA complex, containing only TatA subunits. Substrates initially bind to the TatABC complex, which probably triggers association of the separate TatA complex to form the active translocon.

The protein resides in the cell membrane. Its function is as follows. Part of the twin-arginine translocation (Tat) system that transports large folded proteins containing a characteristic twin-arginine motif in their signal peptide across membranes. TatA could form the protein-conducting channel of the Tat system. This Rhodococcus opacus (strain B4) protein is Sec-independent protein translocase protein TatA.